We begin with the raw amino-acid sequence, 281 residues long: Small ribosomal subunit protein uS2 (281 aa).

The interval 229-281 (RSGANKTEGEAAEQPMAAWEKELLTNEAPAEASAEAAAPAAAEGETAEAPKAE) is disordered. The segment covering 255–275 (EAPAEASAEAAAPAAAEGETA) has biased composition (low complexity).

This sequence belongs to the universal ribosomal protein uS2 family.

The sequence is that of Small ribosomal subunit protein uS2 from Bifidobacterium longum subsp. infantis (strain ATCC 15697 / DSM 20088 / JCM 1222 / NCTC 11817 / S12).